Here is a 63-residue protein sequence, read N- to C-terminus: uncharacterized protein (63 aa).

This is an uncharacterized protein from Haemophilus influenzae (strain ATCC 51907 / DSM 11121 / KW20 / Rd).